The sequence spans 461 residues: MTTRTERDTFGPIEVPADRLWGAQTQRSLQNFDIAGDRMPRELIDALARIKRASAAVNQRLGLLPADKANAVIAAADEVIAGKHPGEFPLVVWQTGSGTQSNMNMNEVLANRASELLGGERGEARLVHPNDDVNRSQSSNDVFPTAMHVAAVTAITRHLLPSLRALRETLARKAIDFDDIIKIGRTHLQDATPLTLGQEFSGYAAQLQHSETHLNAALPHLCELALGGTAVGTGLNAPAGYAEQVAAELAALTGLPFVTSPNKFETMASADGLVHAHGALKTLAASLTKIANDIRWLASGPRSGLGELSIPENEPGSSIMPGKVNPTQSEAMTMLCAQVFGNDVAVNIGGASGNFELNVFRPMIAYNFLHSARLLADGMRSFNDHCAVGIEPNRERIAELVQRSLMLVTALNPHIGYDKSAQIAKKAHKEGTSLREAALALGYVTAEQFDAWVRPEQMVGR.

Substrate-binding positions include 97 to 99 (SGT), Arg-125, 128 to 131 (HPND), 138 to 140 (SSN), and Thr-186. His-187 acts as the Proton donor/acceptor in catalysis. Ser-317 is an active-site residue. Residues Ser-318 and 323 to 325 (KVN) contribute to the substrate site.

It belongs to the class-II fumarase/aspartase family. Fumarase subfamily. Homotetramer.

The protein localises to the cytoplasm. The enzyme catalyses (S)-malate = fumarate + H2O. The protein operates within carbohydrate metabolism; tricarboxylic acid cycle; (S)-malate from fumarate: step 1/1. Its function is as follows. Involved in the TCA cycle. Catalyzes the stereospecific interconversion of fumarate to L-malate. The chain is Fumarate hydratase class II from Ralstonia nicotianae (strain ATCC BAA-1114 / GMI1000) (Ralstonia solanacearum).